A 439-amino-acid chain; its full sequence is 26S proteasome regulatory subunit 6A (439 aa).

M1 is modified (N-acetylmethionine). The residue at position 9 (S9) is a Phosphoserine. G227–T234 contributes to the ATP binding site. S376 bears the Phosphoserine mark.

It belongs to the AAA ATPase family. As to quaternary structure, component of the 19S proteasome regulatory particle complex. The 26S proteasome consists of a 20S core particle (CP) and two 19S regulatory subunits (RP). The regulatory particle is made of a lid composed of 9 subunits, a base containing 6 ATPases including PSMC3 and few additional components. Interacts with PAAF1.

The protein resides in the cytoplasm. It localises to the nucleus. Its function is as follows. Component of the 26S proteasome, a multiprotein complex involved in the ATP-dependent degradation of ubiquitinated proteins. This complex plays a key role in the maintenance of protein homeostasis by removing misfolded or damaged proteins, which could impair cellular functions, and by removing proteins whose functions are no longer required. Therefore, the proteasome participates in numerous cellular processes, including cell cycle progression, apoptosis, or DNA damage repair. PSMC3 belongs to the heterohexameric ring of AAA (ATPases associated with diverse cellular activities) proteins that unfolds ubiquitinated target proteins that are concurrently translocated into a proteolytic chamber and degraded into peptides. The protein is 26S proteasome regulatory subunit 6A (Psmc3) of Rattus norvegicus (Rat).